Consider the following 80-residue polypeptide: Serine palmitoyltransferase small subunit B (80 aa).

Topologically, residues 1–11 (MDVKHIKDYLS) are cytoplasmic. The chain crosses the membrane as a helical span at residues 12–29 (WLYYQYLLITCSYVLEPW). Residues 30–36 (EQSIFNT) lie on the Lumenal side of the membrane. Residues 37-57 (LLLTIIAMVIYSSYIFIPIHV) traverse the membrane as a helical segment. The Cytoplasmic portion of the chain corresponds to 58–80 (RLAVEFFSRIFGGQHESTVALMS).

The protein belongs to the SPTSS family. SPTSSB subfamily. As to quaternary structure, component of the serine palmitoyltransferase (SPT) complex, which is composed of SPTLC1, SPTLC2 or SPTLC3 and SPTSSA or SPTSSB. The heterodimer consisting of SPTLC1 and SPTLC2/SPTLC3 forms the catalytic core of the enzyme, while SPTSSA or SPTSSB subunits determine substrate specificity. SPT also interacts with ORMDL proteins, especially ORMDL3, which negatively regulate SPT activity in the presence of ceramides.

It is found in the endoplasmic reticulum membrane. It participates in lipid metabolism; sphingolipid metabolism. In terms of biological role, component of the serine palmitoyltransferase multisubunit enzyme (SPT) that catalyzes the initial and rate-limiting step in sphingolipid biosynthesis by condensing L-serine and activated acyl-CoA (most commonly palmitoyl-CoA) to form long-chain bases. The SPT complex is composed of SPTLC1, SPTLC2 or SPTLC3 and SPTSSA or SPTSSB. Within this complex, the heterodimer consisting of SPTLC1 and SPTLC2/SPTLC3 forms the catalytic core. Within the SPT complex, SPTSSB stimulates the catalytic activity and plays a role in substrate specificity. SPT complexes with this subunit showing a preference for longer acyl-CoAs. The SPTLC1-SPTLC2-SPTSSB complex shows a strong preference for C18-CoA substrate, while the SPTLC1-SPTLC3-SPTSSB isozyme displays an ability to use a broader range of acyl-CoAs, without apparent preference. The polypeptide is Serine palmitoyltransferase small subunit B (sptssb) (Xenopus laevis (African clawed frog)).